A 348-amino-acid polypeptide reads, in one-letter code: Phospho-2-dehydro-3-deoxyheptonate aldolase, Trp-sensitive (348 aa).

Belongs to the class-I DAHP synthase family.

It carries out the reaction D-erythrose 4-phosphate + phosphoenolpyruvate + H2O = 7-phospho-2-dehydro-3-deoxy-D-arabino-heptonate + phosphate. Its pathway is metabolic intermediate biosynthesis; chorismate biosynthesis; chorismate from D-erythrose 4-phosphate and phosphoenolpyruvate: step 1/7. Functionally, stereospecific condensation of phosphoenolpyruvate (PEP) and D-erythrose-4-phosphate (E4P) giving rise to 3-deoxy-D-arabino-heptulosonate-7-phosphate (DAHP). The polypeptide is Phospho-2-dehydro-3-deoxyheptonate aldolase, Trp-sensitive (aroH) (Escherichia coli (strain K12)).